The primary structure comprises 276 residues: Undecaprenyl-diphosphatase (276 aa).

Helical transmembrane passes span 48-68 (AANS…AIVF), 92-112 (LTIA…FLFE), 119-139 (LFSV…MLIA), 155-175 (ITYK…WPGF), 196-216 (ADFT…LKLV), 229-249 (FFLV…KFFL), and 255-275 (IKLV…IMLV).

This sequence belongs to the UppP family.

The protein localises to the cell membrane. The enzyme catalyses di-trans,octa-cis-undecaprenyl diphosphate + H2O = di-trans,octa-cis-undecaprenyl phosphate + phosphate + H(+). Its function is as follows. Catalyzes the dephosphorylation of undecaprenyl diphosphate (UPP). Confers resistance to bacitracin. The chain is Undecaprenyl-diphosphatase from Bacillus velezensis (strain DSM 23117 / BGSC 10A6 / LMG 26770 / FZB42) (Bacillus amyloliquefaciens subsp. plantarum).